The chain runs to 233 residues: Small ribosomal subunit protein uS3 (233 aa).

Positions 39 to 107 (VRQFLASELT…PSQINIAEVR (69 aa)) constitute a KH type-2 domain.

This sequence belongs to the universal ribosomal protein uS3 family. In terms of assembly, part of the 30S ribosomal subunit. Forms a tight complex with proteins S10 and S14.

Functionally, binds the lower part of the 30S subunit head. Binds mRNA in the 70S ribosome, positioning it for translation. The polypeptide is Small ribosomal subunit protein uS3 (Baumannia cicadellinicola subsp. Homalodisca coagulata).